A 233-amino-acid chain; its full sequence is Sugar fermentation stimulation protein homolog (233 aa).

It belongs to the SfsA family.

The chain is Sugar fermentation stimulation protein homolog from Chelativorans sp. (strain BNC1).